Reading from the N-terminus, the 247-residue chain is Probable transcriptional regulatory protein GM21_0933 (247 aa).

The protein belongs to the TACO1 family.

Its subcellular location is the cytoplasm. The protein is Probable transcriptional regulatory protein GM21_0933 of Geobacter sp. (strain M21).